A 310-amino-acid chain; its full sequence is tRNA-cytidine(32) 2-sulfurtransferase (310 aa).

The PP-loop motif signature appears at 45–50 (SGGKDS). [4Fe-4S] cluster-binding residues include Cys120, Cys123, and Cys211.

Belongs to the TtcA family. In terms of assembly, homodimer. It depends on Mg(2+) as a cofactor. The cofactor is [4Fe-4S] cluster.

It is found in the cytoplasm. It catalyses the reaction cytidine(32) in tRNA + S-sulfanyl-L-cysteinyl-[cysteine desulfurase] + AH2 + ATP = 2-thiocytidine(32) in tRNA + L-cysteinyl-[cysteine desulfurase] + A + AMP + diphosphate + H(+). It participates in tRNA modification. In terms of biological role, catalyzes the ATP-dependent 2-thiolation of cytidine in position 32 of tRNA, to form 2-thiocytidine (s(2)C32). The sulfur atoms are provided by the cysteine/cysteine desulfurase (IscS) system. The protein is tRNA-cytidine(32) 2-sulfurtransferase of Shewanella baltica (strain OS195).